The primary structure comprises 354 residues: Maleylacetate reductase 1 (354 aa).

It belongs to the iron-containing alcohol dehydrogenase family. As to quaternary structure, homodimer.

The catalysed reaction is 3-oxoadipate + NAD(+) = maleylacetate + NADH + H(+). It catalyses the reaction 3-oxoadipate + NADP(+) = maleylacetate + NADPH + H(+). It functions in the pathway aromatic compound metabolism; 3-chlorocatechol degradation. This Cupriavidus pinatubonensis (strain JMP 134 / LMG 1197) (Cupriavidus necator (strain JMP 134)) protein is Maleylacetate reductase 1 (tfdFI).